The chain runs to 281 residues: uncharacterized protein (281 aa).

Transmembrane regions (helical) follow at residues 30-50 (AIVA…FIVI), 54-74 (VFIS…GYYF), 76-96 (FNPL…MGWV), 106-126 (TLIG…IDLT), 153-173 (AGLD…FLAI), 198-218 (IALT…IALL), 235-255 (MMAV…ALSY), and 259-279 (LSSG…SLAF).

Belongs to the ABC-3 integral membrane protein family.

The protein resides in the cell membrane. This is an uncharacterized protein from Synechocystis sp. (strain ATCC 27184 / PCC 6803 / Kazusa).